Reading from the N-terminus, the 352-residue chain is Nuclear receptor subfamily 1 group I member 3 (352 aa).

Residues 8–83 (LRNCVVCGDQ…AGMRKDMILS (76 aa)) constitute a DNA-binding region (nuclear receptor). Residues 11-31 (CVVCGDQATGYHFNALTCEGC) form an NR C4-type zinc finger. T38 bears the Phosphothreonine; by PKC mark. The segment at 47 to 71 (CPFAGSCEVSKIQRRHCPACRLQKC) adopts an NR C4-type zinc-finger fold. One can recognise an NR LBD domain in the interval 109 to 352 (EQEELIQTLL…MMPLLQEICS (244 aa)).

Belongs to the nuclear hormone receptor family. NR1 subfamily. In terms of assembly, heterodimer of NR1I3 and RXR. Interacts with PSMC4. Interacts with ECT2. Directly interacts with DNAJC7; this complex may also include HSP90. Interacts with CRY1. Interacts with CRY2 in a ligand-dependent manner. In terms of processing, phosphorylated at Thr-38 by PKC, dephosphorylation of Thr-38 is required for nuclear translocation and activation.

The protein localises to the nucleus. It is found in the cytoplasm. It localises to the cytoskeleton. Functionally, binds and transactivates the retinoic acid response elements that control expression of the retinoic acid receptor beta 2 and alcohol dehydrogenase 3 genes. Transactivates both the phenobarbital responsive element module of the human CYP2B6 gene and the CYP3A4 xenobiotic response element. This Macaca mulatta (Rhesus macaque) protein is Nuclear receptor subfamily 1 group I member 3 (NR1I3).